The primary structure comprises 155 residues: Large ribosomal subunit protein uL22 (155 aa).

The protein belongs to the universal ribosomal protein uL22 family. In terms of assembly, part of the 50S ribosomal subunit.

Functionally, this protein binds specifically to 23S rRNA. It makes multiple contacts with different domains of the 23S rRNA in the assembled 50S subunit and ribosome. In terms of biological role, the globular domain of the protein is located near the polypeptide exit tunnel on the outside of the subunit, while an extended beta-hairpin is found that lines the wall of the exit tunnel in the center of the 70S ribosome. The chain is Large ribosomal subunit protein uL22 from Pyrococcus abyssi (strain GE5 / Orsay).